Here is a 252-residue protein sequence, read N- to C-terminus: 3-dehydroquinate dehydratase (252 aa).

3-dehydroquinate is bound by residues S21, E46 to R48, and R82. H143 functions as the Proton donor/acceptor in the catalytic mechanism. K170 serves as the catalytic Schiff-base intermediate with substrate. Residues R213, S232, and Q236 each coordinate 3-dehydroquinate.

It belongs to the type-I 3-dehydroquinase family. As to quaternary structure, homodimer.

It carries out the reaction 3-dehydroquinate = 3-dehydroshikimate + H2O. It participates in metabolic intermediate biosynthesis; chorismate biosynthesis; chorismate from D-erythrose 4-phosphate and phosphoenolpyruvate: step 3/7. Involved in the third step of the chorismate pathway, which leads to the biosynthesis of aromatic amino acids. Catalyzes the cis-dehydration of 3-dehydroquinate (DHQ) and introduces the first double bond of the aromatic ring to yield 3-dehydroshikimate. The sequence is that of 3-dehydroquinate dehydratase from Shigella sonnei (strain Ss046).